Reading from the N-terminus, the 153-residue chain is Endoribonuclease YbeY (153 aa).

Zn(2+)-binding residues include His114, His118, and His124.

It belongs to the endoribonuclease YbeY family. Zn(2+) is required as a cofactor.

It localises to the cytoplasm. Functionally, single strand-specific metallo-endoribonuclease involved in late-stage 70S ribosome quality control and in maturation of the 3' terminus of the 16S rRNA. This Shewanella sp. (strain MR-4) protein is Endoribonuclease YbeY.